The following is a 416-amino-acid chain: Phosphatidylinositol 5-phosphate 4-kinase type-2 beta (416 aa).

Ser-2 carries the N-acetylserine modification. A Phosphothreonine modification is found at Thr-8. Position 19 is a phosphoserine (Ser-19). The region spanning 38-415 (ASEPILSVLM…RFNEFMSNIL (378 aa)) is the PIPK domain. The interval 64-70 (VMLMPDD) is required for interaction with PIP5K1A. An N6-acetyllysine mark is found at Lys-94 and Lys-150. ATP-binding positions include 202–204 (RNV) and Lys-214. GTP contacts are provided by residues 203-204 (NV) and Lys-214. Thr-322 carries the post-translational modification Phosphothreonine. Ser-326 bears the Phosphoserine mark. Asp-369 is a binding site for GTP.

In terms of assembly, homodimer. Binds TNFRSF1A. Interacts with PIP4K2A; the interaction suppresses ubiquitination by the SPOP/CUL3 complex. Probably interacts with PIP5K1A; the interaction inhibits PIP5K1A kinase activity. Post-translationally, ubiquitinated by the SPOP/CUL3 complex. Ubiquitination is stimulated by PtdIns5P levels. In terms of processing, phosphorylated on serine residues.

It is found in the endoplasmic reticulum membrane. The protein resides in the cell membrane. It localises to the nucleus. The protein localises to the cytoplasm. The catalysed reaction is a 1,2-diacyl-sn-glycero-3-phospho-(1D-myo-inositol-5-phosphate) + ATP = a 1,2-diacyl-sn-glycero-3-phospho-(1D-myo-inositol-4,5-bisphosphate) + ADP + H(+). The enzyme catalyses 1,2-dihexadecanoyl-sn-glycero-3-phospho-(1D-myo-inositol-5-phosphate) + ATP = 1,2-dihexadecanoyl-sn-glycero-3-phospho-(1D-myo-inositol-4,5-bisphosphate) + ADP + H(+). It catalyses the reaction 1,2-dihexadecanoyl-sn-glycero-3-phospho-(1D-myo-inositol-5-phosphate) + GTP = 1,2-dihexadecanoyl-sn-glycero-3-phospho-(1D-myo-inositol-4,5-bisphosphate) + GDP + H(+). Functionally, participates in the biosynthesis of phosphatidylinositol 4,5-bisphosphate. Preferentially utilizes GTP, rather than ATP, for PI(5)P phosphorylation and its activity reflects changes in direct proportion to the physiological GTP concentration. Its GTP-sensing activity is critical for metabolic adaptation. PIP4Ks negatively regulate insulin signaling through a catalytic-independent mechanism. They interact with PIP5Ks and suppress PIP5K-mediated PtdIns(4,5)P2 synthesis and insulin-dependent conversion to PtdIns(3,4,5)P3. This chain is Phosphatidylinositol 5-phosphate 4-kinase type-2 beta, found in Rattus norvegicus (Rat).